The chain runs to 561 residues: Mesoderm induction early response protein 2 (561 aa).

Disordered regions lie at residues 1-28 and 52-188; these read MAEA…GEPN and QNYG…EDPL. A Phosphoserine modification is found at S11. Polar residues predominate over residues 140–165; the sequence is QSSADDLTPSVTSHEASDLFPSQSGS. The 98-residue stretch at 195-292 folds into the ELM2 domain; sequence KEIMVGPQFQ…EALRRLRFNV (98 aa). The region spanning 297–349 is the SANT domain; sequence DGLCAWSEEERRNFEHGFRVHGKNFHLIQANKVRTRSVGECVEYYYLWKKSER. A disordered region spans residues 360 to 515; it reads GRRKYGPSGN…DGEPEETVGP (156 aa). Over residues 417-428 the composition is skewed to low complexity; that stretch reads LSMGSSMSRSLG. Residues 439 to 451 show a composition bias toward pro residues; that stretch reads SSEPGPRLFPPLD. A compositionally biased stretch (low complexity) spans 453–482; the sequence is PSALPSSRRPPALAEPAFFPPATAAPEPGA.

As to quaternary structure, part of a complex containing at least CDYL, MIER1, MIER2, HDAC1 and HDAC2.

It localises to the nucleus. In terms of biological role, transcriptional repressor. The sequence is that of Mesoderm induction early response protein 2 (MIER2) from Bos taurus (Bovine).